The chain runs to 850 residues: Bifunctional levopimaradiene synthase, chloroplastic (850 aa).

The transit peptide at 1 to 52 directs the protein to the chloroplast; it reads MALPSSSLSSQIHTGATTQCIPHFHGSLNAGTSAGKRRSLYLRWGKGPSKIV. Lys-250 contributes to the substrate binding site. Positions 383 and 385 each coordinate Mg(2+). Positions 383–386 match the DXDD motif motif; it reads DIDD. Lys-470 is a substrate binding site. The Mg(2+) site is built by Asp-602, Asp-606, Asn-746, Thr-750, and Glu-754. Positions 602 to 606 match the DDXXD motif motif; it reads DDLYD.

It belongs to the terpene synthase family. Tpsd subfamily. It depends on Mg(2+) as a cofactor. In terms of tissue distribution, expressed in young tissues such as flushing buds and green bark tissues. Lower levels in mature needles and bark.

The protein localises to the plastid. It is found in the chloroplast. It catalyses the reaction (2E,6E,10E)-geranylgeranyl diphosphate = (+)-copalyl diphosphate. The enzyme catalyses (+)-copalyl diphosphate = abieta-8(14),12-diene + diphosphate. It carries out the reaction (+)-copalyl diphosphate = neoabietadiene + diphosphate. It functions in the pathway terpene metabolism; oleoresin biosynthesis. In terms of biological role, involved in defensive oleoresin formation in conifers in response to insect attack or other injury. Involved in diterpene (C20) olefins biosynthesis. Bifunctional enzyme that catalyzes two sequential cyclizations of geranylgeranyl diphosphate (GGPP) to levopimaradiene. Levopimaradiene is the major products of the enzyme followed by abietadiene, neoabietadiene and palustradiene. No activity with geranyl diphosphate (GPP) or farnesyl diphosphate (FPP) as substrate. The protein is Bifunctional levopimaradiene synthase, chloroplastic (LPS) of Pinus taeda (Loblolly pine).